Consider the following 199-residue polypeptide: Hematopoietic prostaglandin D synthase (199 aa).

The GST N-terminal domain maps to 2-79 (PNYKLTYFNM…YLTKNTDLAG (78 aa)). Glutathione is bound by residues Tyr8, Arg14, Trp39, 49–51 (GKI), and 63–64 (QS). One can recognise a GST C-terminal domain in the interval 81–199 (TEMEQCHVDA…WIKRRPQTKL (119 aa)).

It belongs to the GST superfamily. Sigma family. As to quaternary structure, homodimer. Glutathione is required as a cofactor. Expressed in a number of megakaryocytic cell lines but not in platelets. Highly expressed in adipose tissue, macrophages and placenta. Also expressed at lower levels in lung, heart, lymph nodes, appendix, bone marrow and fetal liver.

The protein resides in the cytoplasm. The catalysed reaction is prostaglandin H2 = prostaglandin D2. It catalyses the reaction RX + glutathione = an S-substituted glutathione + a halide anion + H(+). The enzyme catalyses 2-glyceryl-prostaglandin H2 = 2-glyceryl-prostaglandin D2. Prostaglandin PGD2 synthesis is stimulated by calcium and magnesium ions. One calcium or magnesium ion is bound between the subunits of the homodimer. The interactions with the protein are for the most part mediated via water molecules. Magnesium increases the affinity for glutathione, while calcium has no effect on the affinity for glutathione. Functionally, bifunctional enzyme which catalyzes both the conversion of PGH2 to PGD2, a prostaglandin involved in smooth muscle contraction/relaxation and a potent inhibitor of platelet aggregation, and the conjugation of glutathione with a wide range of aryl halides and organic isothiocyanates. Also exhibits low glutathione-peroxidase activity towards cumene hydroperoxide. In Homo sapiens (Human), this protein is Hematopoietic prostaglandin D synthase.